We begin with the raw amino-acid sequence, 196 residues long: Putative 3-methyladenine DNA glycosylase (196 aa).

It belongs to the DNA glycosylase MPG family.

This is Putative 3-methyladenine DNA glycosylase from Chlorobium phaeobacteroides (strain DSM 266 / SMG 266 / 2430).